A 282-amino-acid chain; its full sequence is Orotidine 5'-phosphate decarboxylase (282 aa).

Lys-95 acts as the Proton donor in catalysis.

The protein belongs to the OMP decarboxylase family. Type 2 subfamily.

It catalyses the reaction orotidine 5'-phosphate + H(+) = UMP + CO2. It participates in pyrimidine metabolism; UMP biosynthesis via de novo pathway; UMP from orotate: step 2/2. This chain is Orotidine 5'-phosphate decarboxylase (pyrF), found in Mycobacterium leprae (strain TN).